The primary structure comprises 388 residues: Cell adhesion molecule 4 (388 aa).

Positions 1–20 (MGRARRFQWPLLLLWAAAAG) are cleaved as a signal peptide. Residues 21-119 (PGAGQEVQTE…DTHHQIATLT (99 aa)) form the Ig-like V-type domain. At 21 to 324 (PGAGQEVQTE…VEAQTSVPYA (304 aa)) the chain is on the extracellular side. N-linked (GlcNAc...) asparagine glycans are attached at residues N31 and N67. 3 disulfides stabilise this stretch: C44/C104, C145/C199, and C245/C291. 2 Ig-like C2-type domains span residues 124 to 219 (PENP…YVLD) and 224 to 307 (PTAR…YVLV). N286 carries an N-linked (GlcNAc...) asparagine glycan. Residues 325 to 345 (IVGGILALLVFLIICVLVGMV) traverse the membrane as a helical segment. The Cytoplasmic portion of the chain corresponds to 346 to 388 (WCSVRQKGSYLTHEASGLDEQGEAREAFLNGSDGHKRKEEFFI). S361 is modified (phosphoserine).

The protein belongs to the nectin family. Monomer and homodimer. Post-translationally, N-glycosylated. As to expression, expressed in brain, prostate, brain, kidney and some other organs.

Its subcellular location is the membrane. Its function is as follows. Involved in the cell-cell adhesion. Has calcium- and magnesium-independent cell-cell adhesion activity. May have tumor-suppressor activity. This chain is Cell adhesion molecule 4 (CADM4), found in Homo sapiens (Human).